A 515-amino-acid polypeptide reads, in one-letter code: 1-pyrroline-5-carboxylate dehydrogenase (515 aa).

Residues glutamate 286 and cysteine 320 contribute to the active site.

It belongs to the aldehyde dehydrogenase family. RocA subfamily.

The enzyme catalyses L-glutamate 5-semialdehyde + NAD(+) + H2O = L-glutamate + NADH + 2 H(+). The protein operates within amino-acid degradation; L-proline degradation into L-glutamate; L-glutamate from L-proline: step 2/2. This Geobacillus thermodenitrificans (strain NG80-2) protein is 1-pyrroline-5-carboxylate dehydrogenase.